The primary structure comprises 101 residues: Small ribosomal subunit protein uS14 (101 aa).

This sequence belongs to the universal ribosomal protein uS14 family. Part of the 30S ribosomal subunit. Contacts proteins S3 and S10.

Functionally, binds 16S rRNA, required for the assembly of 30S particles and may also be responsible for determining the conformation of the 16S rRNA at the A site. This chain is Small ribosomal subunit protein uS14, found in Gluconacetobacter diazotrophicus (strain ATCC 49037 / DSM 5601 / CCUG 37298 / CIP 103539 / LMG 7603 / PAl5).